The following is an 822-amino-acid chain: AP-1 complex subunit gamma-1 (822 aa).

Positions 593 to 604 are enriched in polar residues; sequence NGPSEIVQTNGE. Positions 593–627 are disordered; the sequence is NGPSEIVQTNGETEPAPLETKPPPSGPQPTSQAND. A GAE domain is found at 702–817; the sequence is PGIPSITAYS…QDLAEVNNFP (116 aa).

It belongs to the adaptor complexes large subunit family. In terms of assembly, adaptor protein complex 1 (AP-1) is a heterotetramer composed of two large adaptins (gamma-type subunit AP1G1 and beta-type subunit AP1B1), a medium adaptin (mu-type subunit AP1M1 or AP1M2) and a small adaptin (sigma-type subunit AP1S1 or AP1S2 or AP1S3). Interacts (via GAE domain) with RABEP1. Interacts with EPS15. Interacts with SYNRG/gamma-synergin. Interacts (via GAE domain) with AP1AR (via coiled-coil domain). Interacts with CLN3 (via dileucine motif); this interaction facilitates lysosomal targeting. Interacts (via GAE domain) with AFTPH/aftiphilin; the interaction is required to recruit AFTPH/aftiphilin to the perinuclear region of the cell. Widely expressed.

The protein localises to the golgi apparatus. Its subcellular location is the cytoplasmic vesicle. It is found in the clathrin-coated vesicle membrane. It localises to the cytoplasm. The protein resides in the perinuclear region. The protein localises to the clathrin-coated vesicle. Its subcellular location is the membrane. It is found in the clathrin-coated pit. Its function is as follows. Subunit of clathrin-associated adaptor protein complex 1 that plays a role in protein sorting in the late-Golgi/trans-Golgi network (TGN) and/or endosomes. The AP complexes mediate both the recruitment of clathrin to membranes and the recognition of sorting signals within the cytosolic tails of transmembrane cargo molecules. In association with AFTPH/aftiphilin in the aftiphilin/p200/gamma-synergin complex, involved in the trafficking of transferrin from early to recycling endosomes, and the membrane trafficking of furin and the lysosomal enzyme cathepsin D between the trans-Golgi network (TGN) and endosomes. In Mus musculus (Mouse), this protein is AP-1 complex subunit gamma-1 (Ap1g1).